A 479-amino-acid polypeptide reads, in one-letter code: HSPB1-associated protein 1 (479 aa).

Positions 1-25 are disordered; sequence MEAGCEGSSPQTLGERTMGEEGERV. An interaction with HSPB1 region spans residues 88 to 208; it reads ETECSYVDAT…EDTPFLYPTR (121 aa). The region spanning 124 to 288 is the JmjC domain; sequence WAYADYKYFV…HLARVEEAVT (165 aa). A disordered region spans residues 347–412; sequence PRANGEEPGV…GDSQECTSRN (66 aa). Residues 356–369 are compositionally biased toward basic and acidic residues; that stretch reads VQEHMEVEQARDPS.

Interacts with CRYAB and HSPB1. In terms of tissue distribution, widely expressed. Highly expressed by Sertoli cells in testis (at protein level).

It is found in the cytoplasm. May play a role in cellular stress response. The polypeptide is HSPB1-associated protein 1 (Hspbap1) (Rattus norvegicus (Rat)).